The chain runs to 171 residues: Large ribosomal subunit protein uL10 (171 aa).

The protein belongs to the universal ribosomal protein uL10 family. As to quaternary structure, part of the ribosomal stalk of the 50S ribosomal subunit. The N-terminus interacts with L11 and the large rRNA to form the base of the stalk. The C-terminus forms an elongated spine to which L12 dimers bind in a sequential fashion forming a multimeric L10(L12)X complex.

Its function is as follows. Forms part of the ribosomal stalk, playing a central role in the interaction of the ribosome with GTP-bound translation factors. This chain is Large ribosomal subunit protein uL10, found in Zymomonas mobilis subsp. mobilis (strain ATCC 31821 / ZM4 / CP4).